The chain runs to 331 residues: D-aspartate oxidase 2 (331 aa).

FAD contacts are provided by Asp-35, Lys-36, Ser-43, and Gly-307.

It belongs to the DAMOX/DASOX family. FAD is required as a cofactor.

Its subcellular location is the cytoplasm. It catalyses the reaction D-aspartate + O2 + H2O = oxaloacetate + H2O2 + NH4(+). It carries out the reaction D-glutamate + O2 + H2O = H2O2 + 2-oxoglutarate + NH4(+). Selectively catalyzes the oxidative deamination of acidic amino acids. May play a role in the egg-laying events and early development of the worm, in addition to quality control of the germ cells. This is D-aspartate oxidase 2 from Caenorhabditis briggsae.